The primary structure comprises 103 residues: MYAVVKTGGKQYKVAAGEKLKVEQIPADIGAEITLDQVLAVGAGDQIKFGTPLVSGASVKATVISQGRHDKVKIFKMRRRKHYQKRQGHRQNYTELRIEAINA.

This sequence belongs to the bacterial ribosomal protein bL21 family. In terms of assembly, part of the 50S ribosomal subunit. Contacts protein L20.

In terms of biological role, this protein binds to 23S rRNA in the presence of protein L20. This chain is Large ribosomal subunit protein bL21, found in Cupriavidus pinatubonensis (strain JMP 134 / LMG 1197) (Cupriavidus necator (strain JMP 134)).